The primary structure comprises 217 residues: tRNA (guanine-N(7)-)-methyltransferase (217 aa).

Positions 48, 73, 100, and 123 each coordinate S-adenosyl-L-methionine. The active site involves Asp123. Residues Lys127 and Asp159 each coordinate substrate.

It belongs to the class I-like SAM-binding methyltransferase superfamily. TrmB family.

It carries out the reaction guanosine(46) in tRNA + S-adenosyl-L-methionine = N(7)-methylguanosine(46) in tRNA + S-adenosyl-L-homocysteine. It participates in tRNA modification; N(7)-methylguanine-tRNA biosynthesis. In terms of biological role, catalyzes the formation of N(7)-methylguanine at position 46 (m7G46) in tRNA. The polypeptide is tRNA (guanine-N(7)-)-methyltransferase (Leptospira interrogans serogroup Icterohaemorrhagiae serovar Lai (strain 56601)).